We begin with the raw amino-acid sequence, 187 residues long: Dihydrofolate reductase (187 aa).

Residues 4-185 enclose the DHFR domain; it reads PLNCIVAVSQ…IKYKFEVYEK (182 aa). An involved in methotrexate binding region spans residues 8–37; sequence IVAVSQNMGIGKNGDFPWPMLRNEFKYFQR. NADP(+)-binding positions include alanine 10 and 16–22; that span reads GIGKNGD. 31 to 36 serves as a coordination point for substrate; sequence EFKYFQ. Residue lysine 33 is modified to N6-acetyllysine; alternate. Lysine 33 is modified (N6-succinyllysine; alternate). 55–57 is a binding site for NADP(+); the sequence is RKT. Residues 60–70 are involved in methotrexate binding; sequence SIPEKNRPLKD. Arginine 71 is a substrate binding site. NADP(+) contacts are provided by residues 77-79 and 117-124; these read SRE and GGSSVYKE. Residue threonine 137 coordinates methotrexate.

This sequence belongs to the dihydrofolate reductase family. Homodimer.

It is found in the mitochondrion. It localises to the cytoplasm. The catalysed reaction is (6S)-5,6,7,8-tetrahydrofolate + NADP(+) = 7,8-dihydrofolate + NADPH + H(+). The protein operates within cofactor biosynthesis; tetrahydrofolate biosynthesis; 5,6,7,8-tetrahydrofolate from 7,8-dihydrofolate: step 1/1. Its function is as follows. Key enzyme in folate metabolism. Contributes to the de novo mitochondrial thymidylate biosynthesis pathway. Catalyzes an essential reaction for de novo glycine and purine synthesis, and for DNA precursor synthesis. Binds its own mRNA. This chain is Dihydrofolate reductase (DHFR), found in Mesocricetus auratus (Golden hamster).